The primary structure comprises 179 residues: tRNA (cytidine(56)-2'-O)-methyltransferase (179 aa).

S-adenosyl-L-methionine contacts are provided by residues Leu-82, 112–116 (GAEKV), and 130–137 (VGNQPHSE).

The protein belongs to the aTrm56 family. As to quaternary structure, homodimer.

It is found in the cytoplasm. The catalysed reaction is cytidine(56) in tRNA + S-adenosyl-L-methionine = 2'-O-methylcytidine(56) in tRNA + S-adenosyl-L-homocysteine + H(+). Specifically catalyzes the AdoMet-dependent 2'-O-ribose methylation of cytidine at position 56 in tRNAs. This is tRNA (cytidine(56)-2'-O)-methyltransferase from Methanococcus maripaludis (strain DSM 14266 / JCM 13030 / NBRC 101832 / S2 / LL).